Consider the following 490-residue polypeptide: GTPase Der (490 aa).

EngA-type G domains are found at residues 3–166 (PVVA…MEDL) and 203–376 (IKLA…DSST). GTP is bound by residues 9–16 (GRPNVGKS), 56–60 (DTGGI), 118–121 (NKTD), 209–216 (GRPNVGKS), 256–260 (DTAGV), and 321–324 (NKWD). A KH-like domain is found at 377–461 (RRVGTSMLTR…PIRIQFKEGE (85 aa)).

Belongs to the TRAFAC class TrmE-Era-EngA-EngB-Septin-like GTPase superfamily. EngA (Der) GTPase family. Associates with the 50S ribosomal subunit.

Its function is as follows. GTPase that plays an essential role in the late steps of ribosome biogenesis. This is GTPase Der from Escherichia coli O127:H6 (strain E2348/69 / EPEC).